Here is a 335-residue protein sequence, read N- to C-terminus: Matrix protein (335 aa).

This sequence belongs to the morbillivirus/respirovirus/rubulavirus M protein family. As to quaternary structure, homodimer. Dimerization is critical for virion formation. Interacts with host ANP32B.

The protein resides in the virion. Its subcellular location is the host cell membrane. Functionally, the M protein has a crucial role in virus assembly and interacts with the RNP complex as well as with the viral membrane. Associates with phosphatidylserine (PS) and phosphatidylinositol 4,5-bisphosphate (PIP2) at the plasma membrane. Interaction with PIP2 triggers matrix protein lattice polymerization. Matrix proteins induce host membrane deformation and curvature necessary for virion assembly/budding. The protein is Matrix protein (M) of Homo sapiens (Human).